The primary structure comprises 278 residues: DNA repair protein RecO (278 aa).

Residues 1 to 12 (MGTNDALTSTED) are compositionally biased toward polar residues. The segment at 1-42 (MGTNDALTSTEDAVTAGANDAPLPAPPEPPRKARRATSRTSD) is disordered.

The protein belongs to the RecO family.

Involved in DNA repair and RecF pathway recombination. This Burkholderia lata (strain ATCC 17760 / DSM 23089 / LMG 22485 / NCIMB 9086 / R18194 / 383) protein is DNA repair protein RecO.